A 358-amino-acid polypeptide reads, in one-letter code: E3 ubiquitin-protein ligase SIS3 (358 aa).

The signal sequence occupies residues 1-27 (MAMRGVDFKWYDGFFLSMLATSVIIVA). The next 3 helical transmembrane spans lie at 40-60 (LHIW…FMFV), 85-105 (VVVL…WTVI), and 125-145 (GFLI…FICV). Residues 235–276 (CLICLEEFHIGHEVRGLPCAHNFHVECIDQWLRLNVKCPRCR) form an RING-type; atypical zinc finger. Residues 336 to 358 (TALETAENGGVPPVLTDLSPSRR) are disordered.

In terms of tissue distribution, expressed in roots, stems, leaves, flowers and siliques.

Its subcellular location is the membrane. It carries out the reaction S-ubiquitinyl-[E2 ubiquitin-conjugating enzyme]-L-cysteine + [acceptor protein]-L-lysine = [E2 ubiquitin-conjugating enzyme]-L-cysteine + N(6)-ubiquitinyl-[acceptor protein]-L-lysine.. It participates in protein modification; protein ubiquitination. In terms of biological role, E3 ubiquitin protein ligase that acts as a positive regulator of sugar signaling during early seedling development. Possesses E3 ligase activity in vitro. This chain is E3 ubiquitin-protein ligase SIS3 (SIS3), found in Arabidopsis thaliana (Mouse-ear cress).